The following is a 439-amino-acid chain: Xylose isomerase (439 aa).

Residues His99 and Asp102 contribute to the active site. Positions 230, 266, 269, 294, 305, 307, and 337 each coordinate Mg(2+).

It belongs to the xylose isomerase family. As to quaternary structure, homotetramer. Mg(2+) serves as cofactor.

The protein resides in the cytoplasm. The catalysed reaction is alpha-D-xylose = alpha-D-xylulofuranose. This Shouchella clausii (strain KSM-K16) (Alkalihalobacillus clausii) protein is Xylose isomerase.